A 188-amino-acid chain; its full sequence is Protein TIFY 9 (188 aa).

A disordered region spans residues 20 to 41; that stretch reads DADDRHAKSGGSSASSSSSIRG. Positions 28–38 are enriched in low complexity; that stretch reads SGGSSASSSSS. The Tify domain maps to 80–114; the sequence is AAAAAAPMTLFYNGSVAVFDVSHDKAEAIMRMATE. The Jas motif lies at 135 to 160; sequence PLTRTKSLQRFLSKRKERLTSLGPYQ. Positions 156-188 are disordered; it reads LGPYQVGGPAAVGATTSTTTKSFLAKEEEHTAS. Residues 179–188 are compositionally biased toward basic and acidic residues; sequence LAKEEEHTAS.

It belongs to the TIFY/JAZ family. Ubiquitinated. Targeted for degradation by the SCF(COI1) E3 ubiquitin ligase-proteasome pathway during jasmonate signaling.

Its function is as follows. Repressor of jasmonate responses. The polypeptide is Protein TIFY 9 (Oryza sativa subsp. indica (Rice)).